We begin with the raw amino-acid sequence, 282 residues long: NH(3)-dependent NAD(+) synthetase (282 aa).

An ATP-binding site is contributed by 51–58 (GISGGVDS). A Mg(2+)-binding site is contributed by D57. Residue R148 coordinates deamido-NAD(+). Residue T168 participates in ATP binding. Residue E173 coordinates Mg(2+). Deamido-NAD(+)-binding residues include K181 and D188. Residues K197 and T219 each coordinate ATP. Residue 268–269 (HK) coordinates deamido-NAD(+).

It belongs to the NAD synthetase family. Homodimer.

It carries out the reaction deamido-NAD(+) + NH4(+) + ATP = AMP + diphosphate + NAD(+) + H(+). It functions in the pathway cofactor biosynthesis; NAD(+) biosynthesis; NAD(+) from deamido-NAD(+) (ammonia route): step 1/1. Functionally, catalyzes the ATP-dependent amidation of deamido-NAD to form NAD. Uses ammonia as a nitrogen source. The polypeptide is NH(3)-dependent NAD(+) synthetase (Burkholderia cenocepacia (strain HI2424)).